Here is a 330-residue protein sequence, read N- to C-terminus: Diacylglycerol acyltransferase/mycolyltransferase Ag85B (330 aa).

A signal peptide spans 1-40; sequence MTDLSEKVRAWGRRLVVGAAAAATLPGLIGIAGGAATANA. Position 82–83 (82–83) interacts with substrate; sequence LR. Residues 98-108 form a fibronectin-binding region; it reads FEWYYQSGLSV. The cysteines at positions 127 and 132 are disulfide-linked. Serine 166 and aspartate 194 together coordinate substrate. Catalysis depends on serine 166, which acts as the Nucleophile. The active site involves glutamate 270. Substrate contacts are provided by residues 272 to 275, lysine 279, and 302 to 304; these read FVRS and HSW. Residue histidine 302 is part of the active site.

The protein belongs to the mycobacterial A85 antigen family.

It localises to the secreted. The enzyme catalyses 2 alpha,alpha'-trehalose 6-mycolate = alpha,alpha'-trehalose 6,6'-bismycolate + alpha,alpha-trehalose. It catalyses the reaction an acyl-CoA + a 1,2-diacyl-sn-glycerol = a triacyl-sn-glycerol + CoA. The antigen 85 proteins (FbpA, FbpB, FbpC) are responsible for the high affinity of mycobacteria for fibronectin, a large adhesive glycoprotein, which facilitates the attachment of M.tuberculosis to murine alveolar macrophages (AMs). They also help to maintain the integrity of the cell wall by catalyzing the transfer of mycolic acids to cell wall arabinogalactan and through the synthesis of alpha,alpha-trehalose dimycolate (TDM, cord factor). They catalyze the transfer of a mycoloyl residue from one molecule of alpha,alpha-trehalose monomycolate (TMM) to another TMM, leading to the formation of TDM. The protein is Diacylglycerol acyltransferase/mycolyltransferase Ag85B (fbpB) of Mycobacterium intracellulare (strain ATCC 13950 / DSM 43223 / JCM 6384 / NCTC 13025 / 3600).